Reading from the N-terminus, the 177-residue chain is ATP synthase subunit delta (177 aa).

It belongs to the ATPase delta chain family. In terms of assembly, F-type ATPases have 2 components, F(1) - the catalytic core - and F(0) - the membrane proton channel. F(1) has five subunits: alpha(3), beta(3), gamma(1), delta(1), epsilon(1). F(0) has three main subunits: a(1), b(2) and c(10-14). The alpha and beta chains form an alternating ring which encloses part of the gamma chain. F(1) is attached to F(0) by a central stalk formed by the gamma and epsilon chains, while a peripheral stalk is formed by the delta and b chains.

It localises to the cell inner membrane. Functionally, f(1)F(0) ATP synthase produces ATP from ADP in the presence of a proton or sodium gradient. F-type ATPases consist of two structural domains, F(1) containing the extramembraneous catalytic core and F(0) containing the membrane proton channel, linked together by a central stalk and a peripheral stalk. During catalysis, ATP synthesis in the catalytic domain of F(1) is coupled via a rotary mechanism of the central stalk subunits to proton translocation. Its function is as follows. This protein is part of the stalk that links CF(0) to CF(1). It either transmits conformational changes from CF(0) to CF(1) or is implicated in proton conduction. The protein is ATP synthase subunit delta of Shewanella piezotolerans (strain WP3 / JCM 13877).